A 20-amino-acid polypeptide reads, in one-letter code: DSPTPNTYNIYYGTAASAXN.

It is found in the plastid. Its subcellular location is the chloroplast thylakoid lumen. The chain is Thylakoid lumenal 18.4 kDa protein from Spinacia oleracea (Spinach).